Consider the following 307-residue polypeptide: Nodulation protein NoeC (307 aa).

A run of 8 helical transmembrane segments spans residues 46–66 (APLWLAFMTFCSVASGIYVLN), 91–111 (SGLTGVWMCLVLIALGGVCAI), 117–137 (LFAITASYVALSVIYVGKVRG), 140–160 (VLDLFVLSALYTTRILAGATA), 163–183 (IPVPASFLAFSAMAFVSLASI), 212–232 (IVALICVSAGYAAVVFLELFV), 238–258 (AQGPAPIFVSNAMCVVVAYWI), and 279–299 (VTDGSSLVCILGLALGLVFLM).

It is found in the cell membrane. The chain is Nodulation protein NoeC (noeC) from Azorhizobium caulinodans (strain ATCC 43989 / DSM 5975 / JCM 20966 / LMG 6465 / NBRC 14845 / NCIMB 13405 / ORS 571).